We begin with the raw amino-acid sequence, 599 residues long: Ecdysone oxidase (599 aa).

FAD contacts are provided by residues Asn137–Val140 and Trp537–His538. The Proton acceptor role is filled by His538.

The protein belongs to the GMC oxidoreductase family. Requires FAD as cofactor.

It catalyses the reaction ecdysone + O2 = 3-dehydroecdysone + H2O2. Functionally, involved in the inactivation of ecdysteroid molting hormones by converting ecdysteroids into 3-dehydroecdysteroids. The sequence is that of Ecdysone oxidase from Spodoptera littoralis (Egyptian cotton leafworm).